The following is a 257-amino-acid chain: 1-(5-phosphoribosyl)-5-[(5-phosphoribosylamino)methylideneamino] imidazole-4-carboxamide isomerase (257 aa).

It belongs to the HisA/HisF family.

The protein localises to the cytoplasm. It carries out the reaction 1-(5-phospho-beta-D-ribosyl)-5-[(5-phospho-beta-D-ribosylamino)methylideneamino]imidazole-4-carboxamide = 5-[(5-phospho-1-deoxy-D-ribulos-1-ylimino)methylamino]-1-(5-phospho-beta-D-ribosyl)imidazole-4-carboxamide. The protein operates within amino-acid biosynthesis; L-histidine biosynthesis; L-histidine from 5-phospho-alpha-D-ribose 1-diphosphate: step 4/9. This Neurospora crassa (strain ATCC 24698 / 74-OR23-1A / CBS 708.71 / DSM 1257 / FGSC 987) protein is 1-(5-phosphoribosyl)-5-[(5-phosphoribosylamino)methylideneamino] imidazole-4-carboxamide isomerase (his-7).